The chain runs to 27 residues: Fructokinase (27 aa).

This sequence belongs to the ROK (NagC/XylR) family. In terms of assembly, homodimer. Mg(2+) is required as a cofactor.

The enzyme catalyses D-fructose + ATP = D-fructose 6-phosphate + ADP + H(+). Inhibition by zinc ions. The chain is Fructokinase from Fusobacterium mortiferum.